We begin with the raw amino-acid sequence, 448 residues long: Probable D-serine dehydratase (448 aa).

K111 bears the N6-(pyridoxal phosphate)lysine mark.

This sequence belongs to the serine/threonine dehydratase family. DsdA subfamily. It depends on pyridoxal 5'-phosphate as a cofactor.

The catalysed reaction is D-serine = pyruvate + NH4(+). The chain is Probable D-serine dehydratase from Rhizobium etli (strain CIAT 652).